We begin with the raw amino-acid sequence, 396 residues long: Homoserine O-acetyltransferase (396 aa).

An AB hydrolase-1 domain is found at 53 to 370 (NAILVCHALT…DRGHDAFLLE (318 aa)). Ser158 serves as the catalytic Nucleophile. Arg228 contributes to the substrate binding site. Active-site residues include Asp331 and His364. Asp365 is a binding site for substrate.

It belongs to the AB hydrolase superfamily. MetX family. As to quaternary structure, homodimer.

Its subcellular location is the cytoplasm. The enzyme catalyses L-homoserine + acetyl-CoA = O-acetyl-L-homoserine + CoA. The protein operates within amino-acid biosynthesis; L-methionine biosynthesis via de novo pathway; O-acetyl-L-homoserine from L-homoserine: step 1/1. Transfers an acetyl group from acetyl-CoA to L-homoserine, forming acetyl-L-homoserine. This Gluconobacter oxydans (strain 621H) (Gluconobacter suboxydans) protein is Homoserine O-acetyltransferase.